Reading from the N-terminus, the 717-residue chain is Fatty acid oxidation complex subunit alpha (717 aa).

An enoyl-CoA hydratase/isomerase region spans residues Met1–Ala189. Asp296 contacts substrate. The segment at Lys311–Ala717 is 3-hydroxyacyl-CoA dehydrogenase. NAD(+) is bound by residues Met324, Asp343, Val400–Glu402, Lys407, and Ser429. His450 (for 3-hydroxyacyl-CoA dehydrogenase activity) is an active-site residue. Asn453 lines the NAD(+) pocket. Asn500 and Tyr660 together coordinate substrate.

In the N-terminal section; belongs to the enoyl-CoA hydratase/isomerase family. The protein in the C-terminal section; belongs to the 3-hydroxyacyl-CoA dehydrogenase family. In terms of assembly, heterotetramer of two alpha chains (FadB) and two beta chains (FadA).

The catalysed reaction is a (3S)-3-hydroxyacyl-CoA + NAD(+) = a 3-oxoacyl-CoA + NADH + H(+). The enzyme catalyses a (3S)-3-hydroxyacyl-CoA = a (2E)-enoyl-CoA + H2O. It carries out the reaction a 4-saturated-(3S)-3-hydroxyacyl-CoA = a (3E)-enoyl-CoA + H2O. It catalyses the reaction (3S)-3-hydroxybutanoyl-CoA = (3R)-3-hydroxybutanoyl-CoA. The catalysed reaction is a (3Z)-enoyl-CoA = a 4-saturated (2E)-enoyl-CoA. The enzyme catalyses a (3E)-enoyl-CoA = a 4-saturated (2E)-enoyl-CoA. It participates in lipid metabolism; fatty acid beta-oxidation. Involved in the aerobic and anaerobic degradation of long-chain fatty acids via beta-oxidation cycle. Catalyzes the formation of 3-oxoacyl-CoA from enoyl-CoA via L-3-hydroxyacyl-CoA. It can also use D-3-hydroxyacyl-CoA and cis-3-enoyl-CoA as substrate. In Shewanella piezotolerans (strain WP3 / JCM 13877), this protein is Fatty acid oxidation complex subunit alpha.